Here is a 228-residue protein sequence, read N- to C-terminus: MLLSLTQMLSSRASSRLFLVSYLLLWENVVSTSTCAEKDATIQDSLEKLLTLTTFMSQVVSSETAKLFTEFNNQYAQGKRYNDRIPGTCHTEFFDTPVNKEQSLVRTPETLLTLVHSLLNSWTNALNHLVNEMSTMQGDTSSLISKAREIQAKFDELTTGVKIVQSMIGERDIATYSAWSGLASLQSSNEDVRCFSFYTMIRCLLRDSRKVNTYLEVIKYKMVDQNNC.

The first 31 residues, 1-31 (MLLSLTQMLSSRASSRLFLVSYLLLWENVVS), serve as a signal peptide directing secretion. 2 cysteine pairs are disulfide-bonded: C89-C194 and C203-C228.

Belongs to the somatotropin/prolactin family. In terms of tissue distribution, expressed specifically in placenta. Expressed at high levels in trophoblast cells from both junctional and labyrinth zones of the chorioallantoic placenta the last week of gestation.

It localises to the secreted. The protein is Prolactin-2B1 (Prl2b1) of Mus musculus (Mouse).